The following is a 513-amino-acid chain: GMP synthase [glutamine-hydrolyzing] (513 aa).

The region spanning 9–198 (LILVLDFGSQ…VRRVCDCIGE (190 aa)) is the Glutamine amidotransferase type-1 domain. Cysteine 86 functions as the Nucleophile in the catalytic mechanism. Active-site residues include histidine 172 and glutamate 174. The GMPS ATP-PPase domain occupies 199–388 (WSMENFIEIE…LGIPEHLVWR (190 aa)). 226–232 (SGGVDSS) contributes to the ATP binding site.

Homodimer.

The catalysed reaction is XMP + L-glutamine + ATP + H2O = GMP + L-glutamate + AMP + diphosphate + 2 H(+). The protein operates within purine metabolism; GMP biosynthesis; GMP from XMP (L-Gln route): step 1/1. In terms of biological role, catalyzes the synthesis of GMP from XMP. The chain is GMP synthase [glutamine-hydrolyzing] from Staphylococcus saprophyticus subsp. saprophyticus (strain ATCC 15305 / DSM 20229 / NCIMB 8711 / NCTC 7292 / S-41).